The following is a 119-amino-acid chain: Large ribosomal subunit protein bL20 (119 aa).

It belongs to the bacterial ribosomal protein bL20 family.

In terms of biological role, binds directly to 23S ribosomal RNA and is necessary for the in vitro assembly process of the 50S ribosomal subunit. It is not involved in the protein synthesizing functions of that subunit. The protein is Large ribosomal subunit protein bL20 of Clostridium botulinum (strain Alaska E43 / Type E3).